The sequence spans 499 residues: Lysine--tRNA ligase (499 aa).

Residues E409 and E416 each coordinate Mg(2+).

Belongs to the class-II aminoacyl-tRNA synthetase family. Homodimer. The cofactor is Mg(2+).

The protein localises to the cytoplasm. The catalysed reaction is tRNA(Lys) + L-lysine + ATP = L-lysyl-tRNA(Lys) + AMP + diphosphate. The protein is Lysine--tRNA ligase of Thioalkalivibrio sulfidiphilus (strain HL-EbGR7).